The primary structure comprises 422 residues: MKISLLGHGKTTLALGRFFKKNHNEVKFFDDKFPAFFKDSEGFLCYPSKDFNPNDSQLEIVSPGISFTHPLVMKAKHLMSEYDYIDSLFDHSFTPTMISISGTNGKTTTTEMLTTLLEDFKAVSGGNIGTPLIELFEKRSPLWVLETSSFSLHYTNKAYPLIYLLINVEADHLTWHCNFENYLNAKLKVLTLMPKTSLAILPLKFKEHPIVQNSQAQKIFFDKSEEVLECLKIPSNALFFKGAFLLDAALALLVYEQFLKIKNLKWQDYRENALKRLNAFKIGSHKMEEFRDKQGRLWVDDSKATNIDATLQALKTFKNQKIHLILGGDIKGVNLTPLFEEFKNYKISLYAIGSSASIIQALALEFNVSCQVCLKLEKAVQEIKSVLLQNEVALLSPSAASLDQFSSYKERGEKFKAFVLKD.

102–108 (GTNGKTT) contacts ATP.

The protein belongs to the MurCDEF family.

The protein localises to the cytoplasm. The catalysed reaction is UDP-N-acetyl-alpha-D-muramoyl-L-alanine + D-glutamate + ATP = UDP-N-acetyl-alpha-D-muramoyl-L-alanyl-D-glutamate + ADP + phosphate + H(+). It functions in the pathway cell wall biogenesis; peptidoglycan biosynthesis. Functionally, cell wall formation. Catalyzes the addition of glutamate to the nucleotide precursor UDP-N-acetylmuramoyl-L-alanine (UMA). This is UDP-N-acetylmuramoylalanine--D-glutamate ligase from Helicobacter pylori (strain J99 / ATCC 700824) (Campylobacter pylori J99).